An 875-amino-acid chain; its full sequence is Peptidyl-glycine alpha-amidating monooxygenase B (875 aa).

The signal sequence occupies residues Met1–Arg39. Residues Met3 to Gln394 form a peptidylglycine alpha-hydroxylating monooxygenase region. The Intragranular segment spans residues Ser40–Gly763. 5 disulfide bridges follow: Cys45-Cys184, Cys79-Cys124, Cys112-Cys129, Cys225-Cys332, and Cys291-Cys313. The Cu(2+) site is built by His105 and His106. Cu(2+) is bound by residues His170, His240, His242, and Met312. The tract at residues Asp395–Val716 is peptidyl-alpha-hydroxyglycine alpha-amidating lyase. Arg430 serves as a coordination point for a protein. Asn465 is a glycosylation site (N-linked (GlcNAc...) asparagine). NHL repeat units follow at residues Ser467 to Glu508, Leu516 to Asn561, and Gly569 to Lys613. Disulfide bonds link Cys530–Cys551 and Cys598–Cys609. A protein-binding residues include Tyr550 and Arg602. A glycan (N-linked (GlcNAc...) asparagine) is linked at Asn662. The stretch at Gly666 to Ser709 is one NHL 4 repeat. The tract at residues His735–Ser755 is disordered. N-linked (GlcNAc...) asparagine glycosylation occurs at Asn743. Residues Asn743 to Ser755 show a composition bias toward polar residues. A helical transmembrane segment spans residues Val764–Ile787. Residues Arg788 to Ser875 lie on the Cytoplasmic side of the membrane. Residues Lys837–Ser875 form a disordered region. The span at Glu850 to Tyr864 shows a compositional bias: acidic residues.

In the C-terminal section; belongs to the peptidyl-alpha-hydroxyglycine alpha-amidating lyase family. This sequence in the N-terminal section; belongs to the copper type II ascorbate-dependent monooxygenase family. Monomer. Zn(2+) is required as a cofactor. The cofactor is Cu(2+).

It is found in the cytoplasmic vesicle. The protein localises to the secretory vesicle membrane. It carries out the reaction a [peptide]-C-terminal glycine + 2 L-ascorbate + O2 = a [peptide]-C-terminal (2S)-2-hydroxyglycine + 2 monodehydro-L-ascorbate radical + H2O. The enzyme catalyses a [peptide]-C-terminal (2S)-2-hydroxyglycine = a [peptide]-C-terminal amide + glyoxylate. In terms of biological role, bifunctional enzyme that catalyzes amidation of the C-terminus of proteins. Alpha-amidation is present at the C-terminus of many endocrine hormones and neuropeptides and is required for their activity. C-terminal amidation also takes place in response to protein fragmentation triggered by oxidative stress, promoting degradation of amidated protein fragments by the proteasome. Alpha-amidation involves two sequential reactions, both of which are catalyzed by separate catalytic domains of the enzyme. The first step, catalyzed by peptidyl alpha-hydroxylating monooxygenase (PHM) domain, is the copper-, ascorbate-, and O2- dependent stereospecific hydroxylation (with S stereochemistry) at the alpha-carbon (C-alpha) of the C-terminal glycine of the peptidylglycine substrate. The second step, catalyzed by the peptidylglycine amidoglycolate lyase (PAL) domain, is the zinc-dependent cleavage of the N-C-alpha bond, producing the alpha-amidated peptide and glyoxylate. This Xenopus laevis (African clawed frog) protein is Peptidyl-glycine alpha-amidating monooxygenase B (pam-b).